We begin with the raw amino-acid sequence, 117 residues long: Large ribosomal subunit protein bL20 (117 aa).

It belongs to the bacterial ribosomal protein bL20 family.

In terms of biological role, binds directly to 23S ribosomal RNA and is necessary for the in vitro assembly process of the 50S ribosomal subunit. It is not involved in the protein synthesizing functions of that subunit. The protein is Large ribosomal subunit protein bL20 of Acetivibrio thermocellus (strain ATCC 27405 / DSM 1237 / JCM 9322 / NBRC 103400 / NCIMB 10682 / NRRL B-4536 / VPI 7372) (Clostridium thermocellum).